The chain runs to 322 residues: MRVVLGPMEGVLDHLMRQILTEINDYDLCVTEFVRVIDQVLPDHVFHRLCPELMQGSQTTSGVPVHVQLLGQEPHWMAENAIRAAELGARGIDLNFGCPAKMVNKSKGGAALLQHPELIHSVVKACRDAVPANIPVSAKIRLGWENPEDCFEIVDAIQSAGANELTVHARTKQGGYKASEIKWEYINKIRERFSIPLIANGEIWNFEDGQRCIETTGVDSLMVCRGAFNIPNLGNMVKHNHTPMVWSDVVDLLIYYSKFEMKGDKGLYYPNRVKQWFAYLRQSYPEANELFREIRTFNKAAPIVEHIQRYRDELQSRQSQVA.

Residues 7-9 (PME) and glutamine 68 each bind FMN. Cysteine 98 functions as the Proton donor in the catalytic mechanism. FMN contacts are provided by residues lysine 139, 200 to 202 (NGE), and 224 to 225 (CR).

This sequence belongs to the Dus family. DusC subfamily. FMN serves as cofactor.

The enzyme catalyses 5,6-dihydrouridine(16) in tRNA + NADP(+) = uridine(16) in tRNA + NADPH + H(+). The catalysed reaction is 5,6-dihydrouridine(16) in tRNA + NAD(+) = uridine(16) in tRNA + NADH + H(+). Functionally, catalyzes the synthesis of 5,6-dihydrouridine (D), a modified base found in the D-loop of most tRNAs, via the reduction of the C5-C6 double bond in target uridines. Specifically modifies U16 in tRNAs. The chain is tRNA-dihydrouridine(16) synthase from Vibrio parahaemolyticus serotype O3:K6 (strain RIMD 2210633).